Here is a 413-residue protein sequence, read N- to C-terminus: Succinate--CoA ligase [ADP-forming] subunit beta, mitochondrial (413 aa).

The transit peptide at 1-2 directs the protein to the mitochondrion; sequence RR. The region spanning 11–238 is the ATP-grasp domain; it reads MGLLQEAGIS…SNSAYRQKKI (228 aa). ATP is bound by residues lysine 48 and 55–57; that span reads GRG. Residues asparagine 208 and aspartate 222 each coordinate Mg(2+). Substrate contacts are provided by residues asparagine 273 and 330-332; that span reads GIM.

This sequence belongs to the succinate/malate CoA ligase beta subunit family. ATP-specific subunit beta subfamily. In terms of assembly, heterodimer of an alpha and a beta subunit. The beta subunit determines specificity for ATP. Mg(2+) serves as cofactor. Widely expressed. Not present in liver.

The protein localises to the mitochondrion. The catalysed reaction is succinate + ATP + CoA = succinyl-CoA + ADP + phosphate. The protein operates within carbohydrate metabolism; tricarboxylic acid cycle; succinate from succinyl-CoA (ligase route): step 1/1. In terms of biological role, ATP-specific succinyl-CoA synthetase functions in the citric acid cycle (TCA), coupling the hydrolysis of succinyl-CoA to the synthesis of ATP and thus represents the only step of substrate-level phosphorylation in the TCA. The beta subunit provides nucleotide specificity of the enzyme and binds the substrate succinate, while the binding sites for coenzyme A and phosphate are found in the alpha subunit. This chain is Succinate--CoA ligase [ADP-forming] subunit beta, mitochondrial, found in Columba livia (Rock dove).